A 464-amino-acid polypeptide reads, in one-letter code: MLTKPIQEEEKIYKNSSLGSYWITTFGCQMNKADSERMAGTLEKMGYSRAIDELKADLVLYNTCTIRDSAQQKVYSFLGKQVKRKHSTPKLKLVVAGCLAQQEGESLLRRVPELDLIMGPQHVNNLENLLERVDLGNQVVATEETFISEDITNPRRDSSICGWVNIIYGCNERCSYCVVPSVRGKEQSRYPDAIKSEIESLAHNNFKEVTLLGQNIDAYGRDLPGTTKEGRKENSLTDLLYFIHDVEGIKRIRFSTSHPKYFSKRLINACYELDKVCEHFHIPFQSGNNEILRLMARGYTIEKYKRIIENIRQLMPNASITADAIVAFPGETETQYRETLKLISDIGFDQVMTAAYSPRPNTPAAFWDNQIPEEVKKERLKEINELVETTSRKRNQRYLNNIESVLIEGLNPKNNAQMMGRTRTNRLTFVEISKNIEFNYSYGDEINVKITEARSFSLSGQIYK.

An MTTase N-terminal domain is found at 19-135 (GSYWITTFGC…LENLLERVDL (117 aa)). [4Fe-4S] cluster is bound by residues Cys-28, Cys-64, Cys-98, Cys-170, Cys-174, and Cys-177. Residues 156-393 (RDSSICGWVN…NELVETTSRK (238 aa)) enclose the Radical SAM core domain. Residues 396 to 464 (QRYLNNIESV…SFSLSGQIYK (69 aa)) form the TRAM domain.

It belongs to the methylthiotransferase family. MiaB subfamily. As to quaternary structure, monomer. [4Fe-4S] cluster is required as a cofactor.

It is found in the cytoplasm. It carries out the reaction N(6)-dimethylallyladenosine(37) in tRNA + (sulfur carrier)-SH + AH2 + 2 S-adenosyl-L-methionine = 2-methylsulfanyl-N(6)-dimethylallyladenosine(37) in tRNA + (sulfur carrier)-H + 5'-deoxyadenosine + L-methionine + A + S-adenosyl-L-homocysteine + 2 H(+). Its function is as follows. Catalyzes the methylthiolation of N6-(dimethylallyl)adenosine (i(6)A), leading to the formation of 2-methylthio-N6-(dimethylallyl)adenosine (ms(2)i(6)A) at position 37 in tRNAs that read codons beginning with uridine. The protein is tRNA-2-methylthio-N(6)-dimethylallyladenosine synthase of Prochlorococcus marinus subsp. pastoris (strain CCMP1986 / NIES-2087 / MED4).